The primary structure comprises 455 residues: Protein chibby homolog 2 (455 aa).

Phosphoserine is present on residues Ser41, Ser86, Ser89, Ser97, Ser124, Ser144, Ser148, and Ser150. A coiled-coil region spans residues 160–197 (KRLAKECLLQENKTLREENRALREENRMLRKENKILQV). A phosphoserine mark is found at Ser211 and Ser225. Residues 240–266 (GRENSTLQLLREENRALQQLLEQRKAY) are a coiled coil. The segment at 267–318 (WAQPDEKAASTEEIKPISSPHEEPHGLLPDPGPGLPSPFEEPKGLPAPPDDS) is disordered. Basic and acidic residues predominate over residues 270-291 (PDEKAASTEEIKPISSPHEEPH). Ser276 and Ser332 each carry phosphoserine. Positions 350-421 (SQSLELLREM…KLKLQQKLVI (72 aa)) form a coiled coil.

Belongs to the chibby family. SPERT subfamily. As to quaternary structure, homodimer. Binds to NEK1.

In Bos taurus (Bovine), this protein is Protein chibby homolog 2 (CBY2).